The chain runs to 238 residues: Sugar fermentation stimulation protein homolog (238 aa).

It belongs to the SfsA family.

This chain is Sugar fermentation stimulation protein homolog, found in Vibrio parahaemolyticus serotype O3:K6 (strain RIMD 2210633).